Reading from the N-terminus, the 206-residue chain is Large ribosomal subunit protein uL4 (206 aa).

The segment covering 65-76 (KQKGTGRARHSS) has biased composition (basic residues). Residues 65-94 (KQKGTGRARHSSARAPQFRGGGKAHGPVVR) are disordered.

Belongs to the universal ribosomal protein uL4 family. As to quaternary structure, part of the 50S ribosomal subunit.

One of the primary rRNA binding proteins, this protein initially binds near the 5'-end of the 23S rRNA. It is important during the early stages of 50S assembly. It makes multiple contacts with different domains of the 23S rRNA in the assembled 50S subunit and ribosome. Its function is as follows. Forms part of the polypeptide exit tunnel. The chain is Large ribosomal subunit protein uL4 from Bartonella quintana (strain Toulouse) (Rochalimaea quintana).